Consider the following 183-residue polypeptide: MHLLPELASHHAVSIPELLVSRDERQARQHVWLKRHPVPLVSFTVVAPGPIKDCEVTRRIFNHGVTALRALAAKQGWQIQEQAALVSASGPEGMLSIAAPARDLKLATIELEHSHPLGRLWDIDVLTPEGEILSRRDYSLPPRRCLLCEQSAAVCARGKTHQLTDLLNRMEALLNDVDACNVN.

It belongs to the CitX family.

The catalysed reaction is apo-[citrate lyase ACP] + 2'-(5''-triphospho-alpha-D-ribosyl)-3'-dephospho-CoA = holo-[citrate lyase ACP] + diphosphate. Its function is as follows. Transfers 2-(5''-triphosphoribosyl)-3'-dephosphocoenzyme-A on a serine residue to the apo-acyl carrier protein (gamma chain) of the citrate lyase to yield holo-acyl carrier protein. This is Apo-citrate lyase phosphoribosyl-dephospho-CoA transferase from Escherichia coli O9:H4 (strain HS).